Consider the following 449-residue polypeptide: UDP-N-acetylmuramate--L-alanine ligase (449 aa).

121–127 (GAHGKSS) lines the ATP pocket.

It belongs to the MurCDEF family.

The protein localises to the cytoplasm. The catalysed reaction is UDP-N-acetyl-alpha-D-muramate + L-alanine + ATP = UDP-N-acetyl-alpha-D-muramoyl-L-alanine + ADP + phosphate + H(+). It functions in the pathway cell wall biogenesis; peptidoglycan biosynthesis. Cell wall formation. The chain is UDP-N-acetylmuramate--L-alanine ligase from Helicobacter pylori (strain P12).